The primary structure comprises 205 residues: Large ribosomal subunit protein bL17c (205 aa).

The N-terminal 89 residues, 1–89, are a transit peptide targeting the chloroplast; the sequence is MASASTTWSM…VIDNGGRVFA (89 aa).

Belongs to the bacterial ribosomal protein bL17 family. In terms of assembly, part of the 50S ribosomal subunit.

It is found in the plastid. Its subcellular location is the chloroplast. This protein binds directly to 23S ribosomal RNA. The sequence is that of Large ribosomal subunit protein bL17c (RPL17) from Nicotiana tabacum (Common tobacco).